Reading from the N-terminus, the 217-residue chain is Probable transaldolase (217 aa).

The active-site Schiff-base intermediate with substrate is the K83.

The protein belongs to the transaldolase family. Type 3B subfamily.

It localises to the cytoplasm. The catalysed reaction is D-sedoheptulose 7-phosphate + D-glyceraldehyde 3-phosphate = D-erythrose 4-phosphate + beta-D-fructose 6-phosphate. Its pathway is carbohydrate degradation; pentose phosphate pathway; D-glyceraldehyde 3-phosphate and beta-D-fructose 6-phosphate from D-ribose 5-phosphate and D-xylulose 5-phosphate (non-oxidative stage): step 2/3. Transaldolase is important for the balance of metabolites in the pentose-phosphate pathway. The protein is Probable transaldolase of Phenylobacterium zucineum (strain HLK1).